A 475-amino-acid polypeptide reads, in one-letter code: MTTAPTSPALPASSDTAPTGPAPRGLHVITWGCQMNVYDSARMADVLRPLGYGPVERPEDADMVILNTCHIRERATEKVFSELGRLRKIRDERMSNGADRTIIAVAGCVAQAEGEVILTRAPYVDLVLGPQTYHKLPEMVARAARAGGAVIETDFPVEQKFDFLPTDAAPQTQGNLTAFLTIQEGCDKFCSFCVVPYTRGAETSRPVASVLAEARRMAESGVREITLLGQNVNAYHGDDGKGGSETLAGLVEQLAQIPGLGRIRYMTSHPRDVDQSLIDAHRDNPALMPFLHLPVQSGSDRILKAMNRGHTADEYRESVRKLREARPDLALSSDFIVGHPGETEEDFEATMQLVRDIGFAMAYSFKYSPRPGTPAAGQPMQVPEDVKDRRLAELQALLREQQDAFNADMVGTVQEILVTNRGRKPGQIAGRSPYLQPVHFDGPDHLIGSTVKVAITTRRTNSLGGTLIRETASAC.

The interval 1–21 is disordered; it reads MTTAPTSPALPASSDTAPTGP. The 122-residue stretch at 24-145 folds into the MTTase N-terminal domain; the sequence is RGLHVITWGC…LPEMVARAAR (122 aa). 6 residues coordinate [4Fe-4S] cluster: C33, C69, C108, C186, C190, and C193. Residues 172-404 form the Radical SAM core domain; it reads TQGNLTAFLT…QALLREQQDA (233 aa). The TRAM domain occupies 407–469; sequence ADMVGTVQEI…TNSLGGTLIR (63 aa).

It belongs to the methylthiotransferase family. MiaB subfamily. Monomer. [4Fe-4S] cluster is required as a cofactor.

The protein localises to the cytoplasm. The enzyme catalyses N(6)-dimethylallyladenosine(37) in tRNA + (sulfur carrier)-SH + AH2 + 2 S-adenosyl-L-methionine = 2-methylsulfanyl-N(6)-dimethylallyladenosine(37) in tRNA + (sulfur carrier)-H + 5'-deoxyadenosine + L-methionine + A + S-adenosyl-L-homocysteine + 2 H(+). Functionally, catalyzes the methylthiolation of N6-(dimethylallyl)adenosine (i(6)A), leading to the formation of 2-methylthio-N6-(dimethylallyl)adenosine (ms(2)i(6)A) at position 37 in tRNAs that read codons beginning with uridine. The polypeptide is tRNA-2-methylthio-N(6)-dimethylallyladenosine synthase (Gluconobacter oxydans (strain 621H) (Gluconobacter suboxydans)).